Here is a 23-residue protein sequence, read N- to C-terminus: Potassium channel toxin kappa-KTx 1.2 (23 aa).

2 cysteine pairs are disulfide-bonded: Cys4–Cys22 and Cys8–Cys18. Cysteine amide is present on Cys22.

This sequence belongs to the short scorpion toxin superfamily. Potassium channel inhibitor kappa-KTx family. Kappa-KTx 1 subfamily. Post-translationally, the two disulfide isomers globular (C1-C3, C2-C4) and beads (C1-C2, C3-C4) do not show activity on Kv10.1/KCNH1/EAG1. In terms of tissue distribution, expressed by the venom gland.

Its subcellular location is the secreted. Its function is as follows. Shows weak blocking activity on voltage-gated potassium channels Kv10.1/KCNH1/EAG1 (IC(50)=26 uM), Kv1.2/KCNA2 (Kd=150 uM), Kv1.3/KCNA3 (Kd=40 uM), Kv1.6/KCNA3 (16.6% inhibition at 40 uM toxin). The block is dose-dependent, voltage-independent, and reversible. Also shows a weak inhibitory activity on the plant pathogen F.culmorum growth (IC(50)=18.8-37.7 uM). This chain is Potassium channel toxin kappa-KTx 1.2, found in Chersonesometrus fulvipes (Indian black scorpion).